Here is a 445-residue protein sequence, read N- to C-terminus: 6-phosphogluconate dehydrogenase, decarboxylating (445 aa).

Residues 1-4 (AVMG), 22-24 (NRS), 63-65 (VKA), and Asn-91 contribute to the NADP(+) site. Substrate is bound by residues Asn-91 and 117–119 (SGG). Lys-172 functions as the Proton acceptor in the catalytic mechanism. A substrate-binding site is contributed by 175-176 (HN). Catalysis depends on Glu-179, which acts as the Proton donor. Positions 180, 249, 276, 434, and 440 each coordinate substrate.

This sequence belongs to the 6-phosphogluconate dehydrogenase family. Homodimer.

It carries out the reaction 6-phospho-D-gluconate + NADP(+) = D-ribulose 5-phosphate + CO2 + NADPH. It participates in carbohydrate degradation; pentose phosphate pathway; D-ribulose 5-phosphate from D-glucose 6-phosphate (oxidative stage): step 3/3. Its function is as follows. Catalyzes the oxidative decarboxylation of 6-phosphogluconate to ribulose 5-phosphate and CO(2), with concomitant reduction of NADP to NADPH. This chain is 6-phosphogluconate dehydrogenase, decarboxylating (gnd), found in Citrobacter freundii.